Here is a 130-residue protein sequence, read N- to C-terminus: Small ribosomal subunit protein uS9 (130 aa).

Belongs to the universal ribosomal protein uS9 family.

This chain is Small ribosomal subunit protein uS9, found in Buchnera aphidicola subsp. Acyrthosiphon pisum (strain 5A).